Here is a 799-residue protein sequence, read N- to C-terminus: Phenylalanine--tRNA ligase beta subunit (799 aa).

In terms of domain architecture, tRNA-binding spans 40-147 (KSHLSSVITV…KDTTLGISVR (108 aa)). One can recognise a B5 domain in the interval 402–479 (SKTVTIETNL…RTIGYASIRT (78 aa)). D457, D463, E466, and E467 together coordinate Mg(2+). The FDX-ACB domain occupies 707-799 (SHFPQGQLDL…TAKSNGYSLR (93 aa)).

The protein belongs to the phenylalanyl-tRNA synthetase beta subunit family. Type 1 subfamily. Tetramer of two alpha and two beta subunits. Mg(2+) serves as cofactor.

Its subcellular location is the cytoplasm. It catalyses the reaction tRNA(Phe) + L-phenylalanine + ATP = L-phenylalanyl-tRNA(Phe) + AMP + diphosphate + H(+). In Leptospira biflexa serovar Patoc (strain Patoc 1 / Ames), this protein is Phenylalanine--tRNA ligase beta subunit.